The following is a 622-amino-acid chain: DNA-directed RNA polymerase subunit gamma (622 aa).

Residues C70, C72, C85, and C88 each contribute to the Zn(2+) site. The Mg(2+) site is built by D466, D468, and D470.

This sequence belongs to the RNA polymerase beta' chain family. RpoC1 subfamily. In cyanobacteria the RNAP catalytic core is composed of 2 alpha, 1 beta, 1 beta', 1 gamma and 1 omega subunit. When a sigma factor is associated with the core the holoenzyme is formed, which can initiate transcription. Mg(2+) serves as cofactor. It depends on Zn(2+) as a cofactor.

It carries out the reaction RNA(n) + a ribonucleoside 5'-triphosphate = RNA(n+1) + diphosphate. Functionally, DNA-dependent RNA polymerase catalyzes the transcription of DNA into RNA using the four ribonucleoside triphosphates as substrates. The sequence is that of DNA-directed RNA polymerase subunit gamma from Thermosynechococcus vestitus (strain NIES-2133 / IAM M-273 / BP-1).